The following is a 191-amino-acid chain: Holliday junction branch migration complex subunit RuvA (191 aa).

The interval 1–64 (MIGSITGNVE…DNITQLYGFL (64 aa)) is domain I. Residues 65–142 (NRQEQDYFKM…KMPIEETFSI (78 aa)) form a domain II region. The segment at 143 to 146 (IEND) is flexible linker. Residues 146–191 (DDSLAALISLGYEKLKAFNVIQEIKSKTPDASTQEVIRKALQKLSQ) form a domain III region.

This sequence belongs to the RuvA family. As to quaternary structure, homotetramer. Forms an RuvA(8)-RuvB(12)-Holliday junction (HJ) complex. HJ DNA is sandwiched between 2 RuvA tetramers; dsDNA enters through RuvA and exits via RuvB. An RuvB hexamer assembles on each DNA strand where it exits the tetramer. Each RuvB hexamer is contacted by two RuvA subunits (via domain III) on 2 adjacent RuvB subunits; this complex drives branch migration. In the full resolvosome a probable DNA-RuvA(4)-RuvB(12)-RuvC(2) complex forms which resolves the HJ.

The protein resides in the cytoplasm. In terms of biological role, the RuvA-RuvB-RuvC complex processes Holliday junction (HJ) DNA during genetic recombination and DNA repair, while the RuvA-RuvB complex plays an important role in the rescue of blocked DNA replication forks via replication fork reversal (RFR). RuvA specifically binds to HJ cruciform DNA, conferring on it an open structure. The RuvB hexamer acts as an ATP-dependent pump, pulling dsDNA into and through the RuvAB complex. HJ branch migration allows RuvC to scan DNA until it finds its consensus sequence, where it cleaves and resolves the cruciform DNA. This chain is Holliday junction branch migration complex subunit RuvA, found in Ehrlichia ruminantium (strain Gardel).